A 1012-amino-acid polypeptide reads, in one-letter code: Structural polyprotein (1012 aa).

A divalent metal cation is bound at residue aspartate 30. Residues 513–755 (ADKGYEVVAN…AGRQYDLAMA (243 aa)) form the Peptidase S50 domain. The active-site Nucleophile is serine 652. Residue lysine 692 is part of the active site. A disordered region spans residues 971-1012 (EMKHRNPRRAPPKPKPKPNVPTQRPPGRLGRWIRAVSDEDLE). Residues 975–986 (RNPRRAPPKPKP) are compositionally biased toward basic residues. The segment at 1003–1012 (IRAVSDEDLE) is interaction with VP1 protein.

In terms of assembly, homotrimer. A central divalent metal stabilizes the VP2 trimer. Interacts with host ITGA4/ITGB1. As to quaternary structure, homodimer. Interacts (via C-terminus) with VP1 in the cytoplasm. Interacts with VP2. Post-translationally, specific enzymatic cleavages yield mature proteins. The capsid assembly seems to be regulated by polyprotein processing. The protease VP4 cleaves itself off the polyprotein, thus releasing pre-VP2 and VP3 within the infected cell. During capsid assembly, the C-terminus of pre-VP2 is further processed by VP4, giving rise to VP2, the external capsid protein and three small peptides that all stay closely associated with the capsid.

It localises to the virion. Its subcellular location is the host cytoplasm. Functionally, capsid protein VP2 self assembles to form an icosahedral capsid with a T=13 symmetry, about 70 nm in diameter, and consisting of 260 VP2 trimers. The capsid encapsulates the genomic dsRNA. VP2 is also involved in attachment and entry into the host cell by interacting with host ITGA4/ITGB1. The precursor of VP2 plays an important role in capsid assembly. First, pre-VP2 and VP2 oligomers assemble to form a procapsid. Then, the pre-VP2 intermediates may be processed into VP2 proteins by proteolytic cleavage mediated by VP4 to obtain the mature virion. The final capsid is composed of pentamers and hexamers but VP2 has a natural tendency to assemble into all-pentameric structures. Therefore pre-VP2 may be required to allow formation of the hexameric structures. In terms of biological role, protease VP4 is a serine protease that cleaves the polyprotein into its final products. Pre-VP2 is first partially cleaved, and may be completely processed by VP4 upon capsid maturation. Its function is as follows. Capsid protein VP3 plays a key role in virion assembly by providing a scaffold for the capsid made of VP2. May self-assemble to form a T=4-like icosahedral inner-capsid composed of at least 180 trimers. Plays a role in genomic RNA packaging by recruiting VP1 into the capsid and interacting with the dsRNA genome segments to form a ribonucleoprotein complex. Additionally, the interaction of the VP3 C-terminal tail with VP1 removes the inherent structural blockade of the polymerase active site. Thus, VP3 can also function as a transcriptional activator. Functionally, structural peptide 1 is a small peptide derived from pre-VP2 C-terminus. It destabilizes and perforates cell membranes, suggesting a role during entry. Structural peptide 2 is a small peptide derived from pre-VP2 C-terminus. It is not essential for the virus viability, but viral growth is affected when missing. In terms of biological role, structural peptide 3 is a small peptide derived from pre-VP2 C-terminus. It is not essential for the virus viability, but viral growth is affected when missing. The chain is Structural polyprotein from Avian infectious bursal disease virus (isolate Chicken/UK/UK661/1989) (IBDV).